A 314-amino-acid chain; its full sequence is MQIKLANPRGFCAGVDRAIEIVNRALDVFGPPIYVRHEVVHNKFVVDNLRQRGAIFVEELDQVPNNVIVIFSAHGVSQAVRKEAEGRGLKVFDATCPLVTKVHMEVVRYSRDGHECVLIGHEGHPEVEGTMGQYDASNGGAIYLVEDEADVAALEVRKPEALHYVTQTTLSMDDTSKVIDALRAKFPQIQGPRKNDICYATQNRQDAVKELADQCDMVLVVGSPNSSNSNRLRELAERMGTPAYLIDGAEDMQRGWFDGVRRIGITAGASAPEVLVRGVIAQLREWGASEEQELEGREENITFSMPKELRVKAL.

C12 lines the [4Fe-4S] cluster pocket. H41 and H74 together coordinate (2E)-4-hydroxy-3-methylbut-2-enyl diphosphate. 2 residues coordinate dimethylallyl diphosphate: H41 and H74. Isopentenyl diphosphate is bound by residues H41 and H74. [4Fe-4S] cluster is bound at residue C96. H124 is a (2E)-4-hydroxy-3-methylbut-2-enyl diphosphate binding site. H124 contributes to the dimethylallyl diphosphate binding site. An isopentenyl diphosphate-binding site is contributed by H124. E126 functions as the Proton donor in the catalytic mechanism. T168 lines the (2E)-4-hydroxy-3-methylbut-2-enyl diphosphate pocket. C198 is a [4Fe-4S] cluster binding site. Residues S226, S227, N228, and S270 each coordinate (2E)-4-hydroxy-3-methylbut-2-enyl diphosphate. Dimethylallyl diphosphate is bound by residues S226, S227, N228, and S270. Isopentenyl diphosphate is bound by residues S226, S227, N228, and S270.

Belongs to the IspH family. [4Fe-4S] cluster serves as cofactor.

It catalyses the reaction isopentenyl diphosphate + 2 oxidized [2Fe-2S]-[ferredoxin] + H2O = (2E)-4-hydroxy-3-methylbut-2-enyl diphosphate + 2 reduced [2Fe-2S]-[ferredoxin] + 2 H(+). The catalysed reaction is dimethylallyl diphosphate + 2 oxidized [2Fe-2S]-[ferredoxin] + H2O = (2E)-4-hydroxy-3-methylbut-2-enyl diphosphate + 2 reduced [2Fe-2S]-[ferredoxin] + 2 H(+). It functions in the pathway isoprenoid biosynthesis; dimethylallyl diphosphate biosynthesis; dimethylallyl diphosphate from (2E)-4-hydroxy-3-methylbutenyl diphosphate: step 1/1. The protein operates within isoprenoid biosynthesis; isopentenyl diphosphate biosynthesis via DXP pathway; isopentenyl diphosphate from 1-deoxy-D-xylulose 5-phosphate: step 6/6. Functionally, catalyzes the conversion of 1-hydroxy-2-methyl-2-(E)-butenyl 4-diphosphate (HMBPP) into a mixture of isopentenyl diphosphate (IPP) and dimethylallyl diphosphate (DMAPP). Acts in the terminal step of the DOXP/MEP pathway for isoprenoid precursor biosynthesis. The sequence is that of 4-hydroxy-3-methylbut-2-enyl diphosphate reductase from Pseudomonas aeruginosa (strain ATCC 15692 / DSM 22644 / CIP 104116 / JCM 14847 / LMG 12228 / 1C / PRS 101 / PAO1).